A 126-amino-acid polypeptide reads, in one-letter code: Acidic phospholipase A2 S1E6-a (126 aa).

Positions Val-1 to Gly-3 are cleaved as a signal peptide. 7 cysteine pairs are disulfide-bonded: Cys-29-Cys-119, Cys-31-Cys-47, Cys-46-Cys-98, Cys-52-Cys-126, Cys-53-Cys-91, Cys-60-Cys-84, and Cys-78-Cys-89. The Ca(2+) site is built by Tyr-30, Gly-32, and Gly-34. His-50 is a catalytic residue. Position 51 (Asp-51) interacts with Ca(2+). Asp-92 is an active-site residue.

Homodimer. It depends on Ca(2+) as a cofactor. In terms of tissue distribution, expressed by the venom gland.

Its subcellular location is the secreted. The enzyme catalyses a 1,2-diacyl-sn-glycero-3-phosphocholine + H2O = a 1-acyl-sn-glycero-3-phosphocholine + a fatty acid + H(+). Its function is as follows. Snake venom phospholipase A2 (PLA2) that inhibits ADP-induced platelet aggregation. PLA2 catalyzes the calcium-dependent hydrolysis of the 2-acyl groups in 3-sn-phosphoglycerides. The protein is Acidic phospholipase A2 S1E6-a of Calloselasma rhodostoma (Malayan pit viper).